The sequence spans 653 residues: Extracellular metalloproteinase (653 aa).

The N-terminal stretch at 1–19 is a signal peptide; it reads MRSFLLASLASLSVISVYG. A propeptide spanning residues 20–244 is cleaved from the precursor; sequence HPHARSTLTR…VHAVVDYSAD (225 aa). Residues Asn-327, Asn-336, and Asn-412 are each glycosylated (N-linked (GlcNAc...) asparagine). His-429 serves as a coordination point for Zn(2+). Residue Glu-430 is part of the active site. A Zn(2+)-binding site is contributed by His-433. N-linked (GlcNAc...) asparagine glycans are attached at residues Asn-636 and Asn-637.

The protein belongs to the peptidase M36 family. It depends on Zn(2+) as a cofactor.

It localises to the secreted. Functionally, secreted metalloproteinase that allows assimilation of proteinaceous substrates. This is Extracellular metalloproteinase (MEP) from Pyrenophora tritici-repentis (strain Pt-1C-BFP) (Wheat tan spot fungus).